The chain runs to 81 residues: Photosystem I iron-sulfur center (81 aa).

4Fe-4S ferredoxin-type domains follow at residues Ser2–Trp31 and Ile39–Tyr68. [4Fe-4S] cluster is bound by residues Cys11, Cys14, Cys17, Cys21, Cys48, Cys51, Cys54, and Cys58.

In terms of assembly, the eukaryotic PSI reaction center is composed of at least 11 subunits. [4Fe-4S] cluster serves as cofactor.

Its subcellular location is the plastid. The protein resides in the chloroplast thylakoid membrane. The catalysed reaction is reduced [plastocyanin] + hnu + oxidized [2Fe-2S]-[ferredoxin] = oxidized [plastocyanin] + reduced [2Fe-2S]-[ferredoxin]. Functionally, apoprotein for the two 4Fe-4S centers FA and FB of photosystem I (PSI); essential for photochemical activity. FB is the terminal electron acceptor of PSI, donating electrons to ferredoxin. The C-terminus interacts with PsaA/B/D and helps assemble the protein into the PSI complex. Required for binding of PsaD and PsaE to PSI. PSI is a plastocyanin-ferredoxin oxidoreductase, converting photonic excitation into a charge separation, which transfers an electron from the donor P700 chlorophyll pair to the spectroscopically characterized acceptors A0, A1, FX, FA and FB in turn. The chain is Photosystem I iron-sulfur center from Helianthus annuus (Common sunflower).